Reading from the N-terminus, the 422-residue chain is GPI mannosyltransferase 1 (422 aa).

8 helical membrane-spanning segments follow: residues 10 to 30, 82 to 102, 162 to 182, 216 to 236, 282 to 302, 327 to 347, 352 to 372, and 385 to 405; these read TTPL…YGIY, FPAF…WLIL, IILG…PAIV, LKFG…MFAI, IESF…PLAL, SQYF…SSFL, LGIF…QQGY, and GLWL…GVII.

Belongs to the PIGM family.

The protein localises to the endoplasmic reticulum membrane. It participates in glycolipid biosynthesis; glycosylphosphatidylinositol-anchor biosynthesis. Its function is as follows. Mannosyltransferase involved in glycosylphosphatidylinositol-anchor biosynthesis. Transfers the first alpha-1,4-mannose to GlcN-acyl-PI during GPI precursor assembly. Required for cell wall integrity. This is GPI mannosyltransferase 1 (GPI14) from Gibberella zeae (strain ATCC MYA-4620 / CBS 123657 / FGSC 9075 / NRRL 31084 / PH-1) (Wheat head blight fungus).